The sequence spans 135 residues: Prostate and breast cancer overexpressed gene 1 protein (135 aa).

In terms of tissue distribution, expressed in colon, prostate, small intestine, testis and spleen, with lower expression in thymus, ovary, and peripheral blood leukocytes. Up-regulated expression in prostate, breast, and bladder cancer, but not in lung and colon cancer.

The protein localises to the cytoplasm. It is found in the nucleus. This is Prostate and breast cancer overexpressed gene 1 protein (PBOV1) from Homo sapiens (Human).